Here is a 200-residue protein sequence, read N- to C-terminus: Eukaryotic translation initiation factor isoform 4E (200 aa).

MRNA is bound by residues 44-49 (QGVAWG), lysine 76, and 94-95 (WE). A disulfide bridge connects residues cysteine 99 and cysteine 138. Residues 145–150 (RRSQDK) and 189–192 (KRER) contribute to the mRNA site.

It belongs to the eukaryotic initiation factor 4E family. EIF4F is a multi-subunit complex, the composition of which varies with external and internal environmental conditions. It is composed of at least EIF4A, EIF4E and EIF4G. EIF4E is also known to interact with other partners. In higher plants two isoforms of EIF4F have been identified, named isoform EIF4F and isoform EIF(iso)4F. Isoform EIF4F has subunits p220 and p26, whereas isoform EIF(iso)4F has subunits p82 and p28. In terms of assembly, (Microbial infection) Interacts with viral genome-linked protein (VPg); this interaction is possible in susceptible hosts but impaired in resistant plants. In terms of processing, according to the redox status, the Cys-99-Cys-138 disulfide bridge may have a role in regulating protein function by affecting its ability to bind capped mRNA. Mostly expressed in roots and leaves, and, to a lower extent, in stems, flowers and immature green fruits.

It is found in the cytoplasm. It localises to the nucleus. In terms of biological role, component of the protein complex eIF4F, which is involved in the recognition of the mRNA cap, ATP-dependent unwinding of 5'-terminal secondary structure and recruitment of mRNA to the ribosome. Recognizes and binds the 7-methylguanosine-containing mRNA cap during an early step in the initiation of protein synthesis and facilitates ribosome binding by inducing the unwinding of the mRNAs secondary structures. Key component of recessive resistance to potyviruses. Functionally, (Microbial infection) Susceptibility host factor required for viral infection by recruiting viral RNAs to the host ribosomal complex via an interaction with viral genome-linked protein (VPg). In Solanum lycopersicum (Tomato), this protein is Eukaryotic translation initiation factor isoform 4E.